Here is a 350-residue protein sequence, read N- to C-terminus: Glyoxylate reductase 1 (350 aa).

Thr-31 carries the post-translational modification Phosphothreonine. Residues 173–174 (RI), 252–254 (TAR), and Asp-278 each bind NAD(+). Arg-254 is a catalytic residue. The active site involves Glu-283. His-301 serves as the catalytic Proton donor. Residue 301 to 304 (HMGT) participates in NAD(+) binding.

It belongs to the D-isomer specific 2-hydroxyacid dehydrogenase family.

The protein localises to the cytoplasm. It is found in the nucleus. Its subcellular location is the mitochondrion. The enzyme catalyses glycolate + NAD(+) = glyoxylate + NADH + H(+). It carries out the reaction glycolate + NADP(+) = glyoxylate + NADPH + H(+). The catalysed reaction is (R)-glycerate + NAD(+) = 3-hydroxypyruvate + NADH + H(+). It catalyses the reaction (R)-glycerate + NADP(+) = 3-hydroxypyruvate + NADPH + H(+). Its function is as follows. Glyoxylate reductase that reversibly reduces glyoxylate to glycolate, or alternatively hydroxypyruvate to D-glycerate, using either NADPH or NADH as a cosubstrate. Does not act as a hydroxyisocaproate dehydrogenase even though it also has minor activity on alpha-ketoisocaproate. The chain is Glyoxylate reductase 1 from Saccharomyces cerevisiae (strain ATCC 204508 / S288c) (Baker's yeast).